We begin with the raw amino-acid sequence, 290 residues long: Arylamine N-acetyltransferase 1 (290 aa).

An N-acetylmethionine modification is found at methionine 1. The active-site Acyl-thioester intermediate is cysteine 68. CoA is bound at residue serine 103. 106–107 (VH) serves as a coordination point for substrate. Active-site residues include histidine 107 and aspartate 122. Tyrosine 208 provides a ligand contact to CoA.

The protein belongs to the arylamine N-acetyltransferase family.

It localises to the cytoplasm. It carries out the reaction an arylamine + acetyl-CoA = an N-acetylarylamine + CoA. Functionally, participates in the detoxification of a plethora of hydrazine and arylamine drugs. Acetylates both arylamines and arylalkylamines. The chain is Arylamine N-acetyltransferase 1 (Nat1) from Rattus norvegicus (Rat).